The chain runs to 225 residues: Probable septum site-determining protein MinC (225 aa).

The interval 87-112 (PTHMASPQGNSSKTRSSDTQPKPKTP) is disordered. Polar residues predominate over residues 91-108 (ASPQGNSSKTRSSDTQPK).

This sequence belongs to the MinC family. In terms of assembly, interacts with MinD and FtsZ.

Its function is as follows. Cell division inhibitor that blocks the formation of polar Z ring septums. Rapidly oscillates between the poles of the cell to destabilize FtsZ filaments that have formed before they mature into polar Z rings. Prevents FtsZ polymerization. This chain is Probable septum site-determining protein MinC, found in Prochlorococcus marinus (strain MIT 9313).